The sequence spans 124 residues: MATINQLVRKPRVKKVVKSNVPALEACPQKRGVCTRVYTTTPKKPNSALRKVCRIRLTNGFEVISYIGGEGHNLQEHSVVLIRGGRVKDLPGVRYHTVRGALDCAGVKDRKQGRSKYGVKRPKA.

D89 bears the 3-methylthioaspartic acid mark.

Belongs to the universal ribosomal protein uS12 family. As to quaternary structure, part of the 30S ribosomal subunit. Contacts proteins S8 and S17. May interact with IF1 in the 30S initiation complex.

Its function is as follows. With S4 and S5 plays an important role in translational accuracy. In terms of biological role, interacts with and stabilizes bases of the 16S rRNA that are involved in tRNA selection in the A site and with the mRNA backbone. Located at the interface of the 30S and 50S subunits, it traverses the body of the 30S subunit contacting proteins on the other side and probably holding the rRNA structure together. The combined cluster of proteins S8, S12 and S17 appears to hold together the shoulder and platform of the 30S subunit. In Haemophilus ducreyi (strain 35000HP / ATCC 700724), this protein is Small ribosomal subunit protein uS12.